The sequence spans 261 residues: Phosphatidylglycerol--prolipoprotein diacylglyceryl transferase (261 aa).

4 helical membrane-spanning segments follow: residues 17-37 (FAIH…LLLG), 59-79 (LLFA…TLFY), 94-114 (IWEG…ALLW), and 121-141 (TSFF…LAFG). R142 contributes to the a 1,2-diacyl-sn-glycero-3-phospho-(1'-sn-glycerol) binding site. Transmembrane regions (helical) follow at residues 174-194 (PSQI…LWIY) and 228-248 (FLGL…PMII).

This sequence belongs to the Lgt family.

It localises to the cell inner membrane. The enzyme catalyses L-cysteinyl-[prolipoprotein] + a 1,2-diacyl-sn-glycero-3-phospho-(1'-sn-glycerol) = an S-1,2-diacyl-sn-glyceryl-L-cysteinyl-[prolipoprotein] + sn-glycerol 1-phosphate + H(+). It functions in the pathway protein modification; lipoprotein biosynthesis (diacylglyceryl transfer). Its function is as follows. Catalyzes the transfer of the diacylglyceryl group from phosphatidylglycerol to the sulfhydryl group of the N-terminal cysteine of a prolipoprotein, the first step in the formation of mature lipoproteins. The polypeptide is Phosphatidylglycerol--prolipoprotein diacylglyceryl transferase (Polynucleobacter asymbioticus (strain DSM 18221 / CIP 109841 / QLW-P1DMWA-1) (Polynucleobacter necessarius subsp. asymbioticus)).